The primary structure comprises 549 residues: Membrane protein insertase YidC (549 aa).

A helical transmembrane segment spans residues 8–28; that stretch reads VLLATVLSVAVLIVWQFVFPS. The segment covering 29–39 has biased composition (pro residues); it reads PKPKPQPPKPP. The interval 29 to 68 is disordered; it reads PKPKPQPPKPPEAAQRAEAPAAPAPGQPAAQAPAPAVPQD. 2 stretches are compositionally biased toward low complexity: residues 40-49 and 55-68; these read EAAQRAEAPA and QPAAQAPAPAVPQD. 4 consecutive transmembrane segments (helical) span residues 328-348, 354-374, 424-444, and 502-522; these read IDYGAMARPFAFFARLLLFVM, LVANWGLAIILLTVLVKVLLY, LGGCLPMLIQLPIWFALYATL, and PGFFTLLMLSVPAGLTLYIFV.

Belongs to the OXA1/ALB3/YidC family. Type 1 subfamily. In terms of assembly, interacts with the Sec translocase complex via SecD. Specifically interacts with transmembrane segments of nascent integral membrane proteins during membrane integration.

The protein resides in the cell inner membrane. Required for the insertion and/or proper folding and/or complex formation of integral membrane proteins into the membrane. Involved in integration of membrane proteins that insert both dependently and independently of the Sec translocase complex, as well as at least some lipoproteins. Aids folding of multispanning membrane proteins. The sequence is that of Membrane protein insertase YidC from Anaeromyxobacter sp. (strain Fw109-5).